Here is a 216-residue protein sequence, read N- to C-terminus: Ras-related protein RABE1c (216 aa).

Residue 22–29 (GDSGVGKS) coordinates GTP. An Effector region motif is present at residues 44-52 (FITTIGIDF). GTP-binding positions include 70 to 74 (DTAGQ), 128 to 131 (NKAD), and 159 to 160 (SA). S-geranylgeranyl cysteine attachment occurs at residues C213 and C214.

Belongs to the small GTPase superfamily. Rab family. In terms of assembly, interacts with PI5K2.

The protein resides in the golgi apparatus membrane. It is found in the cell membrane. Involved in membrane trafficking from the Golgi to the plasma membrane. This is Ras-related protein RABE1c (RABE1C) from Arabidopsis thaliana (Mouse-ear cress).